Consider the following 355-residue polypeptide: uncharacterized protein (355 aa).

This is an uncharacterized protein from Acanthamoeba polyphaga (Amoeba).